The following is a 331-amino-acid chain: Ketol-acid reductoisomerase (NADP(+)) (331 aa).

The KARI N-terminal Rossmann domain maps to 2–181; the sequence is LEKYYDKDAD…GATRAVVFET (180 aa). Residues 25–28, arginine 48, serine 52, and 82–85 contribute to the NADP(+) site; these read YGSQ and DEQQ. The active site involves histidine 107. Glycine 133 contributes to the NADP(+) binding site. The KARI C-terminal knotted domain occupies 182-327; it reads SFREETETDL…KEIRATMPQF (146 aa). Mg(2+)-binding residues include aspartate 190, glutamate 194, glutamate 226, and glutamate 230. A substrate-binding site is contributed by serine 251.

The protein belongs to the ketol-acid reductoisomerase family. Requires Mg(2+) as cofactor.

It catalyses the reaction (2R)-2,3-dihydroxy-3-methylbutanoate + NADP(+) = (2S)-2-acetolactate + NADPH + H(+). The enzyme catalyses (2R,3R)-2,3-dihydroxy-3-methylpentanoate + NADP(+) = (S)-2-ethyl-2-hydroxy-3-oxobutanoate + NADPH + H(+). It functions in the pathway amino-acid biosynthesis; L-isoleucine biosynthesis; L-isoleucine from 2-oxobutanoate: step 2/4. Its pathway is amino-acid biosynthesis; L-valine biosynthesis; L-valine from pyruvate: step 2/4. In terms of biological role, involved in the biosynthesis of branched-chain amino acids (BCAA). Catalyzes an alkyl-migration followed by a ketol-acid reduction of (S)-2-acetolactate (S2AL) to yield (R)-2,3-dihydroxy-isovalerate. In the isomerase reaction, S2AL is rearranged via a Mg-dependent methyl migration to produce 3-hydroxy-3-methyl-2-ketobutyrate (HMKB). In the reductase reaction, this 2-ketoacid undergoes a metal-dependent reduction by NADPH to yield (R)-2,3-dihydroxy-isovalerate. This Methanospirillum hungatei JF-1 (strain ATCC 27890 / DSM 864 / NBRC 100397 / JF-1) protein is Ketol-acid reductoisomerase (NADP(+)).